The following is a 250-amino-acid chain: Indole-3-glycerol phosphate synthase (250 aa).

The protein belongs to the TrpC family.

It carries out the reaction 1-(2-carboxyphenylamino)-1-deoxy-D-ribulose 5-phosphate + H(+) = (1S,2R)-1-C-(indol-3-yl)glycerol 3-phosphate + CO2 + H2O. The protein operates within amino-acid biosynthesis; L-tryptophan biosynthesis; L-tryptophan from chorismate: step 4/5. This Bacillus pumilus (strain SAFR-032) protein is Indole-3-glycerol phosphate synthase.